Consider the following 130-residue polypeptide: Small ribosomal subunit protein uS9 (130 aa).

Belongs to the universal ribosomal protein uS9 family.

The chain is Small ribosomal subunit protein uS9 from Pectobacterium atrosepticum (strain SCRI 1043 / ATCC BAA-672) (Erwinia carotovora subsp. atroseptica).